We begin with the raw amino-acid sequence, 224 residues long: Adenylate kinase (224 aa).

Residue 10 to 15 coordinates ATP; that stretch reads GSGKST. An NMP region spans residues 30–59; the sequence is ASGDIIRAEINKGNALGREMKKYIEKGDLL. AMP is bound by residues Ser31, Arg36, 57 to 59, 83 to 86, and Gln90; these read DLL and GYPR. Residues 124 to 161 are LID; sequence GRRICRQCGAVYHIKYNPSKVPGKCDICGGEVIQREDD. Arg125 contributes to the ATP binding site. Residues Cys128 and Cys131 each coordinate Zn(2+). 134–135 is an ATP binding site; that stretch reads VY. Positions 148 and 151 each coordinate Zn(2+). Residues Arg158 and Arg169 each contribute to the AMP site. Position 197 (Gly197) interacts with ATP.

It belongs to the adenylate kinase family. Monomer.

The protein localises to the cytoplasm. It catalyses the reaction AMP + ATP = 2 ADP. The protein operates within purine metabolism; AMP biosynthesis via salvage pathway; AMP from ADP: step 1/1. Catalyzes the reversible transfer of the terminal phosphate group between ATP and AMP. Plays an important role in cellular energy homeostasis and in adenine nucleotide metabolism. The chain is Adenylate kinase from Thermococcus sibiricus (strain DSM 12597 / MM 739).